The primary structure comprises 391 residues: Casein kinase II subunit alpha (391 aa).

Positions 36 to 41 (QDDYQL) are interaction with beta subunit. The region spanning 39–324 (YQLVRKLGRG…AREAMEHPYF (286 aa)) is the Protein kinase domain. ATP contacts are provided by residues 45–53 (LGRGKYSEV) and Lys-68. Residue Asp-156 is the Proton acceptor of the active site. Residues Thr-344 and Thr-360 each carry the phosphothreonine; by CDK1 modification. Phosphoserine; by CDK1 occurs at positions 362 and 370.

It belongs to the protein kinase superfamily. Ser/Thr protein kinase family. CK2 subfamily. In terms of assembly, heterotetramer composed of two catalytic subunits (alpha chain and/or alpha' chain) and two regulatory subunits (beta chains). The tetramer can exist as a combination of 2 alpha/2 beta, 2 alpha'/2 beta or 1 alpha/1 alpha'/2 beta subunits. Also part of a CK2-SPT16-SSRP1 complex composed of SSRP1, SUPT16H, CSNK2A1, CSNK2A2 and CSNK2B, which forms following UV irradiation. Interacts with RNPS1. Interacts with SNAI1. Interacts with PML. Interacts with CCAR2. Interacts with HIRIP3. In terms of processing, phosphorylated at Thr-344, Thr-360, Ser-362 and Ser-370 by CDK1 in prophase and metaphase and dephosphorylated during anaphase. Phosphorylation does not directly affect casein kinase 2 activity, but may contribute to its regulation by forming binding sites for interacting proteins and/or targeting it to different compartments.

Its subcellular location is the nucleus. The enzyme catalyses L-seryl-[protein] + ATP = O-phospho-L-seryl-[protein] + ADP + H(+). The catalysed reaction is L-threonyl-[protein] + ATP = O-phospho-L-threonyl-[protein] + ADP + H(+). Constitutively active protein kinase whose activity is not directly affected by phosphorylation. Seems to be regulated by level of expression and localization. Catalytic subunit of a constitutively active serine/threonine-protein kinase complex that phosphorylates a large number of substrates containing acidic residues C-terminal to the phosphorylated serine or threonine. Regulates numerous cellular processes, such as cell cycle progression, apoptosis and transcription, as well as viral infection. May act as a regulatory node which integrates and coordinates numerous signals leading to an appropriate cellular response. During mitosis, functions as a component of the p53/TP53-dependent spindle assembly checkpoint (SAC) that maintains cyclin-B-CDK1 activity and G2 arrest in response to spindle damage. Also required for p53/TP53-mediated apoptosis, phosphorylating 'Ser-392' of p53/TP53 following UV irradiation. Phosphorylates a number of DNA repair proteins in response to DNA damage, such as MDC1, MRE11, RAD9A, RAD51 and HTATSF1, promoting their recruitment to DNA damage sites. Can also negatively regulate apoptosis. Phosphorylates the caspases CASP9 and CASP2 and the apoptotic regulator NOL3. Phosphorylation protects CASP9 from cleavage and activation by CASP8, and inhibits the dimerization of CASP2 and activation of CASP8. Phosphorylates YY1, protecting YY1 from cleavage by CASP7 during apoptosis. Regulates transcription by direct phosphorylation of RNA polymerases I, II, III and IV. Also phosphorylates and regulates numerous transcription factors including NF-kappa-B, STAT1, CREB1, IRF1, IRF2, ATF1, ATF4, SRF, MAX, JUN, FOS, MYC and MYB. Phosphorylates Hsp90 and its co-chaperones FKBP4 and CDC37, which is essential for chaperone function. Mediates sequential phosphorylation of FNIP1, promoting its gradual interaction with Hsp90, leading to activate both kinase and non-kinase client proteins of Hsp90. Regulates Wnt signaling by phosphorylating CTNNB1 and the transcription factor LEF1. Acts as an ectokinase that phosphorylates several extracellular proteins. Plays an important role in the circadian clock function by phosphorylating BMAL1 at 'Ser-90' which is pivotal for its interaction with CLOCK and which controls CLOCK nuclear entry. Phosphorylates FMR1, promoting FMR1-dependent formation of a membraneless compartment. May phosphorylate histone H2A on 'Ser-1'. The polypeptide is Casein kinase II subunit alpha (CSNK2A1) (Bos taurus (Bovine)).